The sequence spans 250 residues: Leucyl/phenylalanyl-tRNA--protein transferase (250 aa).

It belongs to the L/F-transferase family.

The protein resides in the cytoplasm. The enzyme catalyses N-terminal L-lysyl-[protein] + L-leucyl-tRNA(Leu) = N-terminal L-leucyl-L-lysyl-[protein] + tRNA(Leu) + H(+). The catalysed reaction is N-terminal L-arginyl-[protein] + L-leucyl-tRNA(Leu) = N-terminal L-leucyl-L-arginyl-[protein] + tRNA(Leu) + H(+). It catalyses the reaction L-phenylalanyl-tRNA(Phe) + an N-terminal L-alpha-aminoacyl-[protein] = an N-terminal L-phenylalanyl-L-alpha-aminoacyl-[protein] + tRNA(Phe). Its function is as follows. Functions in the N-end rule pathway of protein degradation where it conjugates Leu, Phe and, less efficiently, Met from aminoacyl-tRNAs to the N-termini of proteins containing an N-terminal arginine or lysine. The protein is Leucyl/phenylalanyl-tRNA--protein transferase of Xanthomonas oryzae pv. oryzae (strain MAFF 311018).